The primary structure comprises 186 residues: Hydra actinoporin-like toxin 6 (186 aa).

The signal sequence occupies residues 1–21; it reads MLVYVCLVVILIQLPFGAAGG. The Cell attachment site signature appears at 158–160; sequence RAG.

It belongs to the actinoporin family. HALT subfamily. As to quaternary structure, octamer or nonamer in membranes. Monomer in the soluble state. In vitro, interacts with folate receptor alpha (of target organism). In terms of tissue distribution, expressed female germline during oogenesis.

The protein resides in the nematocyst. The protein localises to the secreted. It is found in the target cell membrane. Pore-forming protein that forms hydrophilic pores and causes cytolysis. Compared to equinatoxin-2 (AC P61914), it reveals lower cytolysis activity (5-12-fold difference, tested on erythrocytes), a larger pore size (probably 2-3 nm) and different affinity to membrane lipids (100-fold lower affinity to sphingomyelin). Binds to sulfatides. Shows cytolytic activity on HeLa cells, with a different potency than its paralogs (from most potent to less potent: HALT-4&gt;HALT-6~HALT-1&gt;HALT-3&gt;HALT-7&gt;HALT-2). Pore formation is a multi-step process that involves specific recognition of membrane lipid by a protein aromatic residues rich region, firm binding to the membrane (mainly driven by hydrophobic interactions) accompanied by the transfer of the N-terminal region to the lipid-water interface and finally pore formation after oligomerization of monomers. In vitro, binds to the folate receptor alpha (FOLR1), a GPI-anchored membrane protein that plays a major role in the uptake of folate/folic acid into cells via endocytosis, suggesting a possible involvement of this receptor in the mechanism of HALT-1-induced cell lysis. In vivo, does not cause visible paralysis in larvae of the blowfly Sarcophaga faculata, the most common arthropod prey of Hydra. This chain is Hydra actinoporin-like toxin 6, found in Hydra vulgaris (Hydra).